A 124-amino-acid chain; its full sequence is Fluoride-specific ion channel FluC (124 aa).

Transmembrane regions (helical) follow at residues 4–24 (VLYI…LSGW), 32–52 (AFPY…GLIM), 67–87 (IGLT…SYET), and 101–121 (ANVL…IIVA). Na(+) contacts are provided by glycine 75 and threonine 78.

It belongs to the fluoride channel Fluc/FEX (TC 1.A.43) family.

The protein resides in the cell inner membrane. The catalysed reaction is fluoride(in) = fluoride(out). Na(+) is not transported, but it plays an essential structural role and its presence is essential for fluoride channel function. In terms of biological role, fluoride-specific ion channel. Important for reducing fluoride concentration in the cell, thus reducing its toxicity. In Geotalea uraniireducens (strain Rf4) (Geobacter uraniireducens), this protein is Fluoride-specific ion channel FluC.